The sequence spans 97 residues: Acylphosphatase (97 aa).

One can recognise an Acylphosphatase-like domain in the interval 5–92; it reads RAHVWISGRV…GEFVRFEITF (88 aa). Active-site residues include arginine 20 and asparagine 38.

It belongs to the acylphosphatase family.

The catalysed reaction is an acyl phosphate + H2O = a carboxylate + phosphate + H(+). In Syntrophobacter fumaroxidans (strain DSM 10017 / MPOB), this protein is Acylphosphatase (acyP).